The following is a 146-amino-acid chain: Large ribosomal subunit protein uL15 (146 aa).

The interval 1-65 is disordered; sequence MSDIQLNTLK…GQMPLQRRLP (65 aa). The span at 24 to 34 shows a compositional bias: gly residues; sequence RGIGSGLGKTA.

This sequence belongs to the universal ribosomal protein uL15 family. Part of the 50S ribosomal subunit.

Binds to the 23S rRNA. The protein is Large ribosomal subunit protein uL15 of Bordetella petrii (strain ATCC BAA-461 / DSM 12804 / CCUG 43448).